A 244-amino-acid chain; its full sequence is ATP-dependent Clp protease ATP-binding subunit CLPT4, chloroplastic (244 aa).

Residues 1–64 (MQALQASRLT…WRSSGRVITR (64 aa)) constitute a chloroplast transit peptide. The span at 30 to 48 (SRPISSGVSSSQELSSRSS) shows a compositional bias: low complexity. Disordered regions lie at residues 30–55 (SRPISSGVSSSQELSSRSSAPATKSW) and 220–244 (GRRYQLPDETEEAGPLKSEDDVSFL).

Belongs to the ClpA/ClpB family.

It is found in the plastid. The protein resides in the chloroplast. Its function is as follows. Accessory protein regulating the assembly of the plastid Clp protease system. The chain is ATP-dependent Clp protease ATP-binding subunit CLPT4, chloroplastic from Chlamydomonas reinhardtii (Chlamydomonas smithii).